The primary structure comprises 296 residues: Probable cell wall protein PGA41 (296 aa).

A signal peptide spans 1–18 (MKFTIVLFTLISVTVAAA). Over residues 146 to 212 (IASSTKESSS…ITTISSDSST (67 aa)) the composition is skewed to low complexity. The tract at residues 146 to 276 (IASSTKESSS…PNSSQTAPGA (131 aa)) is disordered. Gly residues predominate over residues 220 to 245 (QGGGGNSGNNGSNGDGGNDASGGGGV). Residues Asn229 and Asn268 are each glycosylated (N-linked (GlcNAc...) asparagine). Over residues 247–274 (NENEQASSPPSSQSSTNSNQPNSSQTAP) the composition is skewed to low complexity. Gly275 carries GPI-anchor amidated glycine lipidation. Positions 276–296 (AANYLSSVSVGTLMILVLGLI) are cleaved as a propeptide — removed in mature form.

It belongs to the IHD1 family. In terms of processing, the GPI-anchor is attached to the protein in the endoplasmic reticulum and serves to target the protein to the cell surface. There, the glucosamine-inositol phospholipid moiety is cleaved off and the GPI-modified mannoprotein is covalently attached via its lipidless GPI glycan remnant to the 1,6-beta-glucan of the outer cell wall layer.

It localises to the secreted. The protein localises to the cell wall. It is found in the membrane. Its function is as follows. Probable GPI-anchored cell wall protein that may be involved in cell wall organization, hyphal growth, as well as in virulence. The polypeptide is Probable cell wall protein PGA41 (PGA41) (Candida albicans (strain SC5314 / ATCC MYA-2876) (Yeast)).